The sequence spans 764 residues: 5-methyltetrahydropteroyltriglutamate--homocysteine methyltransferase (764 aa).

5-methyltetrahydropteroyltri-L-glutamate is bound by residues 16–19 (RELK) and K115. L-homocysteine-binding positions include 435 to 437 (IGS) and E488. L-methionine is bound by residues 435-437 (IGS) and E488. 5-methyltetrahydropteroyltri-L-glutamate-binding positions include 519 to 520 (RC) and W565. D603 serves as a coordination point for L-homocysteine. D603 is an L-methionine binding site. E609 lines the 5-methyltetrahydropteroyltri-L-glutamate pocket. Residues H645, C647, and E669 each coordinate Zn(2+). The active-site Proton donor is the H698. C730 is a binding site for Zn(2+).

The protein belongs to the vitamin-B12 independent methionine synthase family. Requires Zn(2+) as cofactor.

It catalyses the reaction 5-methyltetrahydropteroyltri-L-glutamate + L-homocysteine = tetrahydropteroyltri-L-glutamate + L-methionine. The protein operates within amino-acid biosynthesis; L-methionine biosynthesis via de novo pathway; L-methionine from L-homocysteine (MetE route): step 1/1. Catalyzes the transfer of a methyl group from 5-methyltetrahydrofolate to homocysteine resulting in methionine formation. The protein is 5-methyltetrahydropteroyltriglutamate--homocysteine methyltransferase of Burkholderia pseudomallei (strain 668).